The sequence spans 132 residues: Small ribosomal subunit protein uS8c (132 aa).

The protein belongs to the universal ribosomal protein uS8 family. As to quaternary structure, part of the 30S ribosomal subunit.

Its subcellular location is the plastid. It localises to the chloroplast. One of the primary rRNA binding proteins, it binds directly to 16S rRNA central domain where it helps coordinate assembly of the platform of the 30S subunit. This is Small ribosomal subunit protein uS8c (rps8) from Gracilaria tenuistipitata var. liui (Red alga).